Consider the following 516-residue polypeptide: Immunoglobulin G-binding protein A (516 aa).

The signal sequence occupies residues 1-36; that stretch reads MKKKNIYSIRKLGVGIASVTLGTLLISGGVTPAANA. Residues 7–18 carry the YSIRK-G/S signaling motif motif; the sequence is YSIRKLGVGIAS. One copy of the Immunoglobulin-binding region E repeat lies at 37–92; the sequence is AQHDEAQQNAFYQVLNMPNLNADQRNGFIQSLKDDPSQSANVLGEAQKLNDSQAPK. An Immunoglobulin-binding region D repeat occupies 93 to 153; it reads ADAQQNNFNK…KKLNESQAPK (61 aa). Residues 154–211 form an Immunoglobulin-binding region A repeat; the sequence is ADNNFNKEQQNAFYEILNMPNLNEEQRNGFIQSLKDDPSQSANLLSEAKKLNESQAPK. The Immunoglobulin-binding region B repeat unit spans residues 212–269; sequence ADNKFNKEQQNAFYEILHLPNLNEEQRNGFIQSLKDDPSQSANLLAEAKKLNDAQAPK. The Immunoglobulin-binding region C repeat unit spans residues 270 to 327; it reads ADNKFNKEQQNAFYEILHLPNLTEEQRNGFIQSLKDDPSVSKEILAEAKKLNDAQAPK. Over residues 318–420 the composition is skewed to basic and acidic residues; sequence KKLNDAQAPK…GNKPGKEDGN (103 aa). Disordered stretches follow at residues 318 to 440 and 467 to 487; these read KKLN…ANGT and KKQPANHADANKAQALPETGE. Repeat copies occupy residues 333-340, 341-348, 349-356, 357-364, 365-372, 373-380, 381-388, 389-396, 397-404, 405-412, and 413-420. The 11 X 8 AA approximate tandem repeats stretch occupies residues 333 to 420; sequence KPGKEDNNKP…GNKPGKEDGN (88 aa). In terms of domain architecture, LysM spans 421–465; sequence GVHVVKPGDTVNDIAKANGTTADKIAADNKLADKNMIKPGQELVV. Positions 482-486 match the LPXTG sorting signal motif; it reads LPETG. The residue at position 485 (threonine 485) is a Pentaglycyl murein peptidoglycan amidated threonine. Residues 486 to 516 constitute a propeptide, removed by sortase A; that stretch reads GEENPFIGTTVFGGLSLALGAALLAGRRREL.

Belongs to the immunoglobulin-binding protein SpA family. As to quaternary structure, interacts with host TNFRSF1A; this interaction leads to the stimulation of both surface expression and shedding of TNFRSF1A.

The protein resides in the secreted. Its subcellular location is the cell wall. Its function is as follows. Plays a role in the inhibition of the host innate and adaptive immune responses. Possesses five immunoglobulin-binding domains that capture both the fragment crystallizable region (Fc region) and the Fab region (part of Ig that identifies antigen) of immunoglobulins. In turn, Staphylococcus aureus is protected from phagocytic killing via inhibition of Ig Fc region. In addition, the host elicited B-cell response is prevented due to a decrease of antibody-secreting cell proliferation that enter the bone marrow, thereby decreasing long-term antibody production. Inhibits osteogenesis by preventing osteoblast proliferation and expression of alkaline phosphatase, type I collagen, osteopontin and osteocalcin. Acts directly as a pro-inflammatory factor in the lung through its ability to bind and activate tumor necrosis factor alpha receptor 1/TNFRSF1A. The protein is Immunoglobulin G-binding protein A (spa) of Staphylococcus aureus (strain NCTC 8325 / PS 47).